The chain runs to 685 residues: Kinesin-related protein 11 (685 aa).

The Kinesin motor domain occupies 4–405; the sequence is NISVSVRARP…LKFASRAKKI (402 aa). A disordered region spans residues 36-105; it reads TSLPPPITQP…TTVPASPAPT (70 aa). Over residues 47–105 the composition is skewed to low complexity; sequence SSLPPISTPIKSSSSSSTSTSAGSLKTPLKTPLKTPLKTPLKTNSTTTNTTVPASPAPT. 156-163 serves as a coordination point for ATP; it reads GITSSGKT. Residues 411–488 adopt a coiled-coil conformation; the sequence is VNEILDDKAL…KINNLNKLIL (78 aa). The interval 495–568 is disordered; sequence NSASKGGSGS…QSTSSLTIGG (74 aa). Over residues 511 to 520 the composition is skewed to polar residues; sequence RSTFVSPSQN. Residues 533 to 565 are compositionally biased toward low complexity; sequence PNSFSNLLLQSPSQNNNNNSHISPLSQSTSSLT. Residues 574–683 are a coiled coil; the sequence is FESNELIQIQ…LKSKIQEYEV (110 aa).

It belongs to the TRAFAC class myosin-kinesin ATPase superfamily. Kinesin family.

The protein localises to the cytoplasm. The protein resides in the cytoskeleton. Its function is as follows. Microtubule-associated force-producing protein that plays a role in organelle transport. Its motor activity is directed toward the microtubule's plus end. This Dictyostelium discoideum (Social amoeba) protein is Kinesin-related protein 11 (kif11).